The sequence spans 2353 residues: C2 domain-containing protein 3 (2353 aa).

Residues 1-27 form a disordered region; sequence MKQRKGQGSGGSRGRKKRGLSDISPST. Ser466 is subject to Phosphoserine. Disordered regions lie at residues 488–508 and 549–568; these read KVLE…RNRN and GVPP…AGPP. Over residues 496-507 the composition is skewed to basic residues; the sequence is KLKKRSAGKRNR. Positions 521-678 constitute a C2 1 domain; the sequence is DAQTMTLSVD…IQSELLSFSD (158 aa). Ser728 carries the post-translational modification Phosphoserine. C2 domains lie at 787–919, 985–1147, 1171–1339, and 1403–1533; these read SHNL…SRLL, QPTA…HRED, SSGL…TGWY, and EPAT…TLTV. The tract at residues 1569 to 1591 is disordered; that stretch reads HELDSMDCSSHSESEQLPRRNDE. The 129-residue stretch at 1617–1745 folds into the C2 6 domain; sequence TTAEVRLTQE…SGFQFVCGWY (129 aa). The disordered stretch occupies residues 1822–1846; it reads SKELDFSSPGRSDTTRSQASRHEEH. A compositionally biased stretch (polar residues) spans 1830–1839; the sequence is PGRSDTTRSQ. A Phosphoserine modification is found at Ser1891. Disordered regions lie at residues 1972–2032, 2084–2118, 2130–2269, and 2301–2334; these read ALSS…NGGR, TSPW…PGPF, LSSP…QSLL, and PAAT…LNLP. Over residues 2007–2016 the composition is skewed to basic and acidic residues; it reads PLVRAPDKGT. A compositionally biased stretch (polar residues) spans 2084-2098; sequence TSPWSSVISDTSEVI. A phosphoserine mark is found at Ser2114 and Ser2132. Residues 2181–2198 show a composition bias toward polar residues; that stretch reads SGAQQSSTFVGWSSPQTD. Residues 2236-2253 are compositionally biased toward basic and acidic residues; sequence SRRENHKGPPIDSSDIRQ. A compositionally biased stretch (polar residues) spans 2254–2267; it reads RQVTTGSETSTKQS.

As to quaternary structure, interacts with IFT88, BBS4 and PCM1. Interacts with OFD1; OFD1 may act as a negative regulator of C2CD3. Associates with the BBSome complex.

The protein localises to the cytoplasm. The protein resides in the cytoskeleton. It is found in the cilium basal body. It localises to the microtubule organizing center. Its subcellular location is the centrosome. The protein localises to the centriole. Component of the centrioles that acts as a positive regulator of centriole elongation. Promotes assembly of centriolar distal appendage, a structure at the distal end of the mother centriole that acts as an anchor of the cilium, and is required for recruitment of centriolar distal appendages proteins CEP83, SCLT1, CEP89, FBF1 and CEP164. Not required for centriolar satellite integrity or RAB8 activation. Required for primary cilium formation. Required for sonic hedgehog/SHH signaling and for proteolytic processing of GLI3. This is C2 domain-containing protein 3 (C2CD3) from Homo sapiens (Human).